A 264-amino-acid chain; its full sequence is 2',3'-cyclic-nucleotide 2'-phosphodiesterase (264 aa).

Fe cation-binding residues include Asp-8, Glu-39, Asn-40, and Asn-67. Catalysis depends on His-68, which acts as the Proton donor. Fe cation-binding residues include His-150, His-175, and His-177.

The protein belongs to the YmdB-like family. In terms of assembly, homodimer. Fe(2+) is required as a cofactor. Requires Fe(3+) as cofactor.

It is found in the cytoplasm. It carries out the reaction a nucleoside 2',3'-cyclic phosphate + H2O = a nucleoside 3'-phosphate + H(+). Plays a central, regulatory role in the late adaptive responses and affects the levels of many genes. May act via regulation of cAMP levels. Decreases the expression of motility genes and induces genes involved in biofilm formation, by controlling the expression of SlrR. Required for formation of intercellular nanotubes that bridge neighboring cells to allow molecular exchange. Plays a key role in directing the early stages of colony development. In vitro, has a metal-dependent phosphodiesterase activity against 2',3'-cAMP and 2',3'-cGMP. Also has 3',5'-cyclic-nucleotide phosphodiesterase activity, but cannot use cyclic di-AMP or cyclic di-GMP, and does not have phosphatase activity. This is 2',3'-cyclic-nucleotide 2'-phosphodiesterase (ymdB) from Bacillus subtilis (strain 168).